The chain runs to 72 residues: SRY-related protein AES2 (72 aa).

Positions 1-69 form a DNA-binding region, HMG box; the sequence is VKRPMNAFMV…KHMADYPDYK (69 aa).

The protein resides in the nucleus. The polypeptide is SRY-related protein AES2 (Alligator mississippiensis (American alligator)).